We begin with the raw amino-acid sequence, 105 residues long: Met repressor (105 aa).

It belongs to the MetJ family. As to quaternary structure, homodimer.

The protein localises to the cytoplasm. Its function is as follows. This regulatory protein, when combined with SAM (S-adenosylmethionine) represses the expression of the methionine regulon and of enzymes involved in SAM synthesis. This Glaesserella parasuis serovar 5 (strain SH0165) (Haemophilus parasuis) protein is Met repressor.